The sequence spans 375 residues: Serine protease 23 (375 aa).

The signal sequence occupies residues 1–23 (MAGTPGHPIFLLLLLRAIGQVSP). An N-linked (GlcNAc...) asparagine glycan is attached at Asn93. An intrachain disulfide couples Cys153 to Cys169. His168 (charge relay system) is an active-site residue. Asn199 is a glycosylation site (N-linked (GlcNAc...) asparagine). Residues Asp232 and Ser308 each act as charge relay system in the active site.

It belongs to the peptidase S1 family.

The protein localises to the secreted. In Bos taurus (Bovine), this protein is Serine protease 23 (PRSS23).